A 141-amino-acid polypeptide reads, in one-letter code: Large ribosomal subunit protein bL17 (141 aa).

The protein belongs to the bacterial ribosomal protein bL17 family. As to quaternary structure, part of the 50S ribosomal subunit. Contacts protein L32.

This chain is Large ribosomal subunit protein bL17, found in Sinorhizobium medicae (strain WSM419) (Ensifer medicae).